Reading from the N-terminus, the 389-residue chain is Inner membrane transport protein YdhP (389 aa).

Over 1–6 (MKINYP) the chain is Cytoplasmic. Residues 7–27 (LLALAIGAFGIGTTEFSPMGL) traverse the membrane as a helical segment. Residues 28 to 43 (LPVIARGVDVSIPAAG) are Periplasmic-facing. Residues 44-64 (MLISAYAVGVMVGAPLMTLLL) form a helical membrane-spanning segment. Residues 65-70 (SHRARR) lie on the Cytoplasmic side of the membrane. The chain crosses the membrane as a helical span at residues 71–91 (SALIFLMAIFTLGNVLSAIAP). The Periplasmic segment spans residues 92–100 (DYMTLMLSR). The helical transmembrane segment at 101-121 (ILTSLNHGAFFGLGSVVAASV) threads the bilayer. Residues 122–130 (VPKHKQASA) lie on the Cytoplasmic side of the membrane. The helical transmembrane segment at 131–151 (VATMFMGLTLANIGGVPAATW) threads the bilayer. The Periplasmic portion of the chain corresponds to 152-159 (LGETIGWR). Residues 160–180 (MSFLATAGLGVISMVSLFFSL) traverse the membrane as a helical segment. Over 181 to 203 (PKGGAGARPEVKKELAVLMRPQV) the chain is Cytoplasmic. A helical transmembrane segment spans residues 204-224 (LSALLTTVLGAGAMFTLYTYI). Topologically, residues 225-236 (SPVLQSITHATP) are periplasmic. A helical transmembrane segment spans residues 237 to 257 (VFVTAMLVLIGVGFSIGNYLG). The Cytoplasmic segment spans residues 258-266 (GKLADRSVN). Residues 267 to 287 (GTLKGFLLLLMVIMLAIPFLA) form a helical membrane-spanning segment. Over 288–290 (RNE) the chain is Periplasmic. Residues 291–311 (FGAAISMVVWGAATFAVVPPL) form a helical membrane-spanning segment. Residues 312 to 330 (QMRVMRVASEAPGLSSSVN) lie on the Cytoplasmic side of the membrane. Residues 331–351 (IGAFNLGNALGAAAGGAVISA) form a helical membrane-spanning segment. Topologically, residues 352-356 (GLGYS) are periplasmic. Residues 357–377 (FVPVMGAIVAGLALLLVFMSA) form a helical membrane-spanning segment. Residues 378-389 (RKQPETVCVANS) are Cytoplasmic-facing.

The protein belongs to the major facilitator superfamily.

The protein localises to the cell inner membrane. The chain is Inner membrane transport protein YdhP (ydhP) from Escherichia coli (strain K12).